The chain runs to 136 residues: Histone H3.3 (136 aa).

A disordered region spans residues 1 to 42 (MARTKQTARKSTGGKAPRKQLASKAARKSAPVSGGVKKPHRY). Position 5 is an N6,N6,N6-trimethyllysine; alternate (K5). At K5 the chain carries N6,N6-dimethyllysine; alternate. N6-methyllysine; alternate is present on residues K5 and K10. Residue K10 is modified to N6-acetyllysine; alternate. At S11 the chain carries Phosphoserine. K15 bears the N6,N6-dimethyllysine; alternate mark. Residues K15, K19, K24, K28, and K37 each carry the N6-acetyllysine; alternate modification. An N6-methyllysine; alternate mark is found at K19, K24, K28, and K37. An N6,N6,N6-trimethyllysine; alternate mark is found at K28 and K37. 2 positions are modified to N6,N6-dimethyllysine; alternate: K28 and K37. N6-acetyllysine is present on residues K57 and K65. K80 carries the post-translational modification N6,N6,N6-trimethyllysine; alternate. K80 is subject to N6,N6-dimethyllysine; alternate. K80 is modified (N6-methyllysine; alternate).

Belongs to the histone H3 family. The nucleosome is a histone octamer containing two molecules each of H2A, H2B, H3 and H4 assembled in one H3-H4 heterotetramer and two H2A-H2B heterodimers. The octamer wraps approximately 147 bp of DNA. In terms of processing, phosphorylated by IPL1 to form H3S10ph. H3S10ph promotes subsequent H3K14ac formation by GCN5 and is required for transcriptional activation through TBP recruitment to the promoters. Post-translationally, mono-, di- and trimethylated by the COMPASS complex to form H3K4me1/2/3. H3K4me activates gene expression by regulating transcription elongation and plays a role in telomere length maintenance. H3K4me enrichment correlates with transcription levels, and occurs in a 5' to 3' gradient with H3K4me3 enrichment at the 5'-end of genes, shifting to H3K4me2 and then H3K4me1. Methylated by SET2 to form H3K36me. H3K36me represses gene expression. Methylated by DOT1 to form H3K79me. H3K79me is required for association of SIR proteins with telomeric regions and for telomeric silencing. The COMPASS-mediated formation of H3K4me2/3 and the DOT1-mediated formation of H3K79me require H2BK123ub1. Acetylation of histone H3 leads to transcriptional activation. H3K14ac formation by GCN5 is promoted by H3S10ph. H3K14ac can also be formed by ESA1. H3K56ac formation occurs predominantly in newly synthesized H3 molecules during G1, S and G2/M of the cell cycle and may be involved in DNA repair.

The protein localises to the nucleus. Its subcellular location is the chromosome. Core component of nucleosome. Nucleosomes wrap and compact DNA into chromatin, limiting DNA accessibility to the cellular machineries which require DNA as a template. Histones thereby play a central role in transcription regulation, DNA repair, DNA replication and chromosomal stability. DNA accessibility is regulated via a complex set of post-translational modifications of histones, also called histone code, and nucleosome remodeling. The chain is Histone H3.3 (HHT3) from Debaryomyces hansenii (strain ATCC 36239 / CBS 767 / BCRC 21394 / JCM 1990 / NBRC 0083 / IGC 2968) (Yeast).